Consider the following 723-residue polypeptide: Calpastatin (723 aa).

2 disordered regions span residues 1–402 and 422–509; these read MNPT…PGRC and STHS…LPPL. Basic residues predominate over residues 21-30; the sequence is PNKKRHKKQA. Lys32 is covalently cross-linked (Glycyl lysine isopeptide (Lys-Gly) (interchain with G-Cter in SUMO2)). The span at 46–84 shows a compositional bias: basic and acidic residues; it reads VVHEKKTQEVKPKEHTEPKSQPKHPSDTRSKHAPKEKAV. Lys50 carries the N6-acetyllysine modification. 2 stretches are compositionally biased toward low complexity: residues 85–94 and 113–125; these read SKSSEQPPSE and SAVPAVAAAASAE. Ser87 carries the post-translational modification Phosphoserine. Thr137 carries the post-translational modification Phosphothreonine. A compositionally biased stretch (acidic residues) spans 157–173; sequence TALDDLIDTLGEPEETK. The Inhibitory domain 1 repeat unit spans residues 171–224; that stretch reads ETKEDTTTYTGPEVSDPMSSTYIEELGKREVTLPPKYRELLNKEEGIAGPPPDS. Positions 195–216 are enriched in basic and acidic residues; the sequence is ELGKREVTLPPKYRELLNKEEG. Ser224 and Ser245 each carry phosphoserine. Basic and acidic residues-rich tracts occupy residues 249-263 and 306-367; these read DAKKTEKEKSTEEAL and PRPE…KPLS. Residues 307-359 form an Inhibitory domain 2 repeat; the sequence is RPELDPSSIKEVDEAKAKEEKVKKCGEDEERVPSEYRLKPATDKDGKPLLPEA. Residues Ser367, Ser369, and Ser376 each carry the phosphoserine modification. Residues 378–396 show a composition bias toward basic and acidic residues; it reads DFDRSKCKEKQSKPTEKNR. Ser443 bears the Phosphoserine mark. Residues 445-504 are compositionally biased toward basic and acidic residues; that stretch reads GKKEADPEDGKPVEDKVKEKAKEEDREKLGEREETIPPDYRLEEAKDKDGKPLPPKEVKE. Residues 449 to 502 form an Inhibitory domain 3 repeat; it reads ADPEDGKPVEDKVKEKAKEEDREKLGEREETIPPDYRLEEAKDKDGKPLPPKEV. Phosphoserine is present on residues Ser519 and Ser530. The disordered stretch occupies residues 547–723; that stretch reads SQTPAPTTQA…KPKADGKSTS (177 aa). The span at 548-560 shows a compositional bias: low complexity; that stretch reads QTPAPTTQAAGPP. Over residues 562 to 571 the composition is skewed to basic and acidic residues; sequence DSARDNKELD. Phosphoserine is present on residues Ser578 and Ser580. The stretch at 586–642 is one Inhibitory domain 4 repeat; it reads PDPDEHKPVEDKVKEKAKAEHRDKLGERDDTIPPKYQHLLDDNKEGTPGKPKRSESP. Over residues 586–643 the composition is skewed to basic and acidic residues; sequence PDPDEHKPVEDKVKEKAKAEHRDKLGERDDTIPPKYQHLLDDNKEGTPGKPKRSESPR. Over residues 653–670 the composition is skewed to polar residues; it reads NLQVPRTPLTPSQGTWTA. Over residues 672–690 the composition is skewed to low complexity; the sequence is PQLQKPQQTQQRTKTRSLL. The span at 701–723 shows a compositional bias: basic and acidic residues; the sequence is KAKDSTKAKEETSKPKADGKSTS.

It belongs to the protease inhibitor I27 (calpastatin) family.

Functionally, specific inhibition of calpain (calcium-dependent cysteine protease). Plays a key role in postmortem tenderization of meat and have been proposed to be involved in muscle protein degradation in living tissue. This Ovis aries (Sheep) protein is Calpastatin (CAST).